A 1282-amino-acid chain; its full sequence is ATP-dependent helicase/nuclease subunit A (1282 aa).

The UvrD-like helicase ATP-binding domain occupies 10–481; it reads SKWTDSQRQV…IELQENFRSS (472 aa). An ATP-binding site is contributed by 31–38; the sequence is AGAGAGKT. The region spanning 516–820 is the UvrD-like helicase C-terminal domain; sequence KPRELYLNED…RLMSIHKSKG (305 aa).

This sequence belongs to the helicase family. AddA subfamily. In terms of assembly, heterodimer of AddA and AddB/RexB. It depends on Mg(2+) as a cofactor.

The enzyme catalyses Couples ATP hydrolysis with the unwinding of duplex DNA by translocating in the 3'-5' direction.. The catalysed reaction is ATP + H2O = ADP + phosphate + H(+). The heterodimer acts as both an ATP-dependent DNA helicase and an ATP-dependent, dual-direction single-stranded exonuclease. Recognizes the chi site generating a DNA molecule suitable for the initiation of homologous recombination. The AddA nuclease domain is required for chi fragment generation; this subunit has the helicase and 3' -&gt; 5' nuclease activities. The polypeptide is ATP-dependent helicase/nuclease subunit A (Natranaerobius thermophilus (strain ATCC BAA-1301 / DSM 18059 / JW/NM-WN-LF)).